A 227-amino-acid chain; its full sequence is Cytochrome c oxidase subunit 2 (227 aa).

Over 1-14 (MAYPMQLGFQDATS) the chain is Mitochondrial intermembrane. Residues 15–45 (PIMEELLHFHDHTLMIVFLISSLVLYVISLM) form a helical membrane-spanning segment. Residues 46–59 (LTTKLTHTSTMDAQ) are Mitochondrial matrix-facing. A helical transmembrane segment spans residues 60 to 87 (EVETIWTILPAIILILIALPSLRILYMM). Topologically, residues 88–227 (DEINNPSLTV…YFEKWSASML (140 aa)) are mitochondrial intermembrane. The Cu cation site is built by histidine 161, cysteine 196, glutamate 198, cysteine 200, histidine 204, and methionine 207. Glutamate 198 provides a ligand contact to Mg(2+).

It belongs to the cytochrome c oxidase subunit 2 family. Component of the cytochrome c oxidase (complex IV, CIV), a multisubunit enzyme composed of 14 subunits. The complex is composed of a catalytic core of 3 subunits MT-CO1, MT-CO2 and MT-CO3, encoded in the mitochondrial DNA, and 11 supernumerary subunits COX4I, COX5A, COX5B, COX6A, COX6B, COX6C, COX7A, COX7B, COX7C, COX8 and NDUFA4, which are encoded in the nuclear genome. The complex exists as a monomer or a dimer and forms supercomplexes (SCs) in the inner mitochondrial membrane with NADH-ubiquinone oxidoreductase (complex I, CI) and ubiquinol-cytochrome c oxidoreductase (cytochrome b-c1 complex, complex III, CIII), resulting in different assemblies (supercomplex SCI(1)III(2)IV(1) and megacomplex MCI(2)III(2)IV(2)). Found in a complex with TMEM177, COA6, COX18, COX20, SCO1 and SCO2. Interacts with TMEM177 in a COX20-dependent manner. Interacts with COX20. Interacts with COX16. Cu cation serves as cofactor.

It localises to the mitochondrion inner membrane. The enzyme catalyses 4 Fe(II)-[cytochrome c] + O2 + 8 H(+)(in) = 4 Fe(III)-[cytochrome c] + 2 H2O + 4 H(+)(out). Component of the cytochrome c oxidase, the last enzyme in the mitochondrial electron transport chain which drives oxidative phosphorylation. The respiratory chain contains 3 multisubunit complexes succinate dehydrogenase (complex II, CII), ubiquinol-cytochrome c oxidoreductase (cytochrome b-c1 complex, complex III, CIII) and cytochrome c oxidase (complex IV, CIV), that cooperate to transfer electrons derived from NADH and succinate to molecular oxygen, creating an electrochemical gradient over the inner membrane that drives transmembrane transport and the ATP synthase. Cytochrome c oxidase is the component of the respiratory chain that catalyzes the reduction of oxygen to water. Electrons originating from reduced cytochrome c in the intermembrane space (IMS) are transferred via the dinuclear copper A center (CU(A)) of subunit 2 and heme A of subunit 1 to the active site in subunit 1, a binuclear center (BNC) formed by heme A3 and copper B (CU(B)). The BNC reduces molecular oxygen to 2 water molecules using 4 electrons from cytochrome c in the IMS and 4 protons from the mitochondrial matrix. The sequence is that of Cytochrome c oxidase subunit 2 (MT-CO2) from Gazella spekei (Speke's gazelle).